A 260-amino-acid chain; its full sequence is Vaa serine proteinase homolog 1 (260 aa).

An N-terminal signal peptide occupies residues 1-18; the sequence is MVLIRVLANLLVLQLSYA. A propeptide spanning residues 19–24 is cleaved from the precursor; sequence QKSSEL. One can recognise a Peptidase S1 domain in the interval 25–251; sequence VIGGDECNIN…YTDWIQSIIA (227 aa). Intrachain disulfides connect Cys31-Cys165, Cys52-Cys68, Cys100-Cys258, Cys144-Cys212, Cys176-Cys191, and Cys202-Cys227. Residue Asn123 is glycosylated (N-linked (GlcNAc...) asparagine). The key residues for binding to FVIIIa stretch occupies residues 172 to 186; it reads DYSVCQKVYRKLPEK. N-linked (GlcNAc...) asparagine glycosylation is present at Asn253.

Belongs to the peptidase S1 family. Snake venom subfamily. N-glycosylated. The toxin exists in multiple glycoforms. In terms of tissue distribution, expressed by the venom gland.

It localises to the secreted. Its function is as follows. This is the first member of the serine protease family that has strong anticoagulant activity and lacks enzymatic activity. It inhibits activities of three blood coagulation complexes: (1) prothrombinase complex (composed of blood coagulation factors Va and Xa (F5 and F10)) (IC(50)=164.1 nM), (2) intrinsic tenase complex (composed of factors VIIIa and IXa (F8 and F9)), and (3) extrinsic tenase complex (composed of tissue factor and factor VIIa (F7)). The toxin also has been observed to bind prothrombin, factor FVa, non-activated and activated forms of factors FVII (F7) (FVII and FVIIa), factor FVIIIa (F8), factors FIX and FIXa (F9) and factors FX and FXa (F10). The toxin inhibits the activity of the intrinsic tenase complex mainly by competing with FIXa (F9) for binding to FVIIIa (F8). This chain is Vaa serine proteinase homolog 1, found in Vipera ammodytes ammodytes (Western sand viper).